We begin with the raw amino-acid sequence, 150 residues long: MARCSCLIPAAWFRRIICSFTPPLRAPMIVDILVRFRIPVFSAWRGPCSPSTRDRGDDHLADRWKSVLLIIASIACGWIGWSGEVLLLPPAMFFPLLWAMAPSRTIATLVAVGYFLAACRGLPQGVANFYATDLWPRLVLWAVASVSVND.

It to A.tumefaciens conjugal transfer protein TraB.

This is an uncharacterized protein from Agrobacterium tumefaciens (strain 15955).